Consider the following 99-residue polypeptide: Protein translation factor SUI1 homolog (99 aa).

Belongs to the SUI1 family.

This is Protein translation factor SUI1 homolog from Pyrococcus horikoshii (strain ATCC 700860 / DSM 12428 / JCM 9974 / NBRC 100139 / OT-3).